A 99-amino-acid chain; its full sequence is DNA-binding protein Fis (99 aa).

The segment at residues 75 to 94 is a DNA-binding region (H-T-H motif); the sequence is QTRAASIMGINRSTLRKKLK.

This sequence belongs to the transcriptional regulatory Fis family. Homodimer.

In terms of biological role, activates ribosomal RNA transcription. Plays a direct role in upstream activation of rRNA promoters. The sequence is that of DNA-binding protein Fis from Buchnera aphidicola subsp. Schizaphis graminum (strain Sg).